Consider the following 80-residue polypeptide: MVIIRLARGGAKKRPFYSIVVADKRSKRDGRYIEQLGFFNPIAAGGEVPLRIDMERANYWLSQGAQPSERVAQLFKSYSA.

Belongs to the bacterial ribosomal protein bS16 family.

This is Small ribosomal subunit protein bS16 from Nitrosococcus oceani (strain ATCC 19707 / BCRC 17464 / JCM 30415 / NCIMB 11848 / C-107).